Here is a 134-residue protein sequence, read N- to C-terminus: UPF0412 protein YaaI (134 aa).

Positions 1-23 are cleaved as a signal peptide; sequence MKSVFTISASLAISLMLCCTAQA.

It belongs to the UPF0412 family.

The protein is UPF0412 protein YaaI of Shigella dysenteriae serotype 1 (strain Sd197).